A 362-amino-acid chain; its full sequence is Somatostatin receptor type 5 (362 aa).

A compositionally biased stretch (polar residues) spans 1-10 (MEPLSLTSTP). Residues 1 to 24 (MEPLSLTSTPSWNASAASSSSHNW) are disordered. Topologically, residues 1–35 (MEPLSLTSTPSWNASAASSSSHNWSLVDPVSPMGA) are extracellular. Over residues 11-24 (SWNASAASSSSHNW) the composition is skewed to low complexity. N-linked (GlcNAc...) asparagine glycosylation is found at Asn-13 and Asn-23. The helical transmembrane segment at 36-63 (RAVLVPVLYLLVCTVGLGGNTLVIYVVL) threads the bilayer. Over 64–73 (RYAKMKTVTN) the chain is Cytoplasmic. A helical transmembrane segment spans residues 74–99 (VYILNLAVADVLFMLGLPFLATQNAV). Topologically, residues 100 to 110 (SYWPFGSFLCR) are extracellular. Cysteines 109 and 184 form a disulfide. A helical transmembrane segment spans residues 111 to 132 (LVMTLDGINQFTSIFCLMVMSV). Over 133 to 154 (DRYLAVVHPLRSARWRRPRVAK) the chain is Cytoplasmic. Residues 155–175 (LASAAVWVFSLLMSLPLLVFA) traverse the membrane as a helical segment. The Extracellular portion of the chain corresponds to 176–195 (DVQEGWGTCNLSWPEPVGLW). Residue Asn-185 is glycosylated (N-linked (GlcNAc...) asparagine). A helical transmembrane segment spans residues 196–220 (GAAFITYTSVLGFFGPLLVICLCYL). Over 221–246 (LIVVKVKAAGMRVGSSRRRRSERKVT) the chain is Cytoplasmic. The chain crosses the membrane as a helical span at residues 247–272 (RMVVVVVLVFVGCWLPFFIVNIVNLA). Topologically, residues 273 to 282 (FTLPEEPTSA) are extracellular. A helical transmembrane segment spans residues 283-307 (GLYFFVVVLSYANSCANPLLYGFLS). The Cytoplasmic segment spans residues 308-362 (DNFRQSFRKALCLRRGYGVEDADAIEPRPDKSGRPQTTLPTRSCEANGLMQTSRL). Cys-319 is lipidated: S-palmitoyl cysteine; by ZDHHC5. The tract at residues 330 to 362 (DAIEPRPDKSGRPQTTLPTRSCEANGLMQTSRL) is disordered.

This sequence belongs to the G-protein coupled receptor 1 family. As to quaternary structure, heterodimer with SSTR2. Heterodimerization with SSTR2 increases cell growth inhibition activity of SSTR2. Palmitoylated at Cys-319 by ZDHHC5, but not ZDHHC8. Palmitoylation creates an additional intracellular loop which is thought to be important for efficient coupling to G-proteins and may target the protein to lipid rafts. As to expression, expressed in adult brain but not in liver, heart, spleen, or kidney.

Its subcellular location is the cell membrane. Its function is as follows. Receptor for somatostatin-28. The activity of this receptor is mediated by G proteins which inhibit adenylyl cyclase. Increases cell growth inhibition activity of SSTR2 following heterodimerization. This chain is Somatostatin receptor type 5 (Sstr5), found in Mus musculus (Mouse).